A 260-amino-acid polypeptide reads, in one-letter code: Thiazole synthase (260 aa).

Lys-96 (schiff-base intermediate with DXP) is an active-site residue. 1-deoxy-D-xylulose 5-phosphate contacts are provided by residues Gly-157, 184–185 (AG), and 206–207 (NT).

The protein belongs to the ThiG family. As to quaternary structure, homotetramer. Forms heterodimers with either ThiH or ThiS.

Its subcellular location is the cytoplasm. It carries out the reaction [ThiS sulfur-carrier protein]-C-terminal-Gly-aminoethanethioate + 2-iminoacetate + 1-deoxy-D-xylulose 5-phosphate = [ThiS sulfur-carrier protein]-C-terminal Gly-Gly + 2-[(2R,5Z)-2-carboxy-4-methylthiazol-5(2H)-ylidene]ethyl phosphate + 2 H2O + H(+). Its pathway is cofactor biosynthesis; thiamine diphosphate biosynthesis. Functionally, catalyzes the rearrangement of 1-deoxy-D-xylulose 5-phosphate (DXP) to produce the thiazole phosphate moiety of thiamine. Sulfur is provided by the thiocarboxylate moiety of the carrier protein ThiS. In vitro, sulfur can be provided by H(2)S. This is Thiazole synthase from Bradyrhizobium sp. (strain ORS 278).